Reading from the N-terminus, the 42-residue chain is Photosystem II reaction center protein J (42 aa).

A helical transmembrane segment spans residues 10–30; it reads IPLWIIGTLAGTLVIGLLAIF.

This sequence belongs to the PsbJ family. As to quaternary structure, PSII is composed of 1 copy each of membrane proteins PsbA, PsbB, PsbC, PsbD, PsbE, PsbF, PsbH, PsbI, PsbJ, PsbK, PsbL, PsbM, PsbT, PsbX, PsbY, PsbZ, Psb30/Ycf12, at least 3 peripheral proteins of the oxygen-evolving complex and a large number of cofactors. It forms dimeric complexes.

The protein resides in the plastid. Its subcellular location is the chloroplast thylakoid membrane. Its function is as follows. One of the components of the core complex of photosystem II (PSII). PSII is a light-driven water:plastoquinone oxidoreductase that uses light energy to abstract electrons from H(2)O, generating O(2) and a proton gradient subsequently used for ATP formation. It consists of a core antenna complex that captures photons, and an electron transfer chain that converts photonic excitation into a charge separation. The protein is Photosystem II reaction center protein J of Chaetosphaeridium globosum (Charophycean green alga).